Consider the following 111-residue polypeptide: Class I hydrophobin 2 (111 aa).

An N-terminal signal peptide occupies residues 1–21; that stretch reads MFSRVMFCTFLILPLLAAATA. 4 cysteine pairs are disulfide-bonded: Cys-30-Cys-90, Cys-37-Cys-84, Cys-38-Cys-71, and Cys-91-Cys-104.

The protein belongs to the fungal hydrophobin family. Self-assembles to form functional amyloid fibrils called rodlets. Self-assembly into fibrillar rodlets occurs spontaneously at hydrophobic:hydrophilic interfaces and the rodlets further associate laterally to form amphipathic monolayers. Behavior depends on environmental conditions: (1) when the pH increases or in the presence of Ca(2+) ions, an assembled state, beta-sheet rich, is formed; (2) when the solvent polarity increases, the vhm2 shows an increased tendency to reach hydrophobic/hydrophilic interfaces, with no detectable conformational change; and (3) at high temperature, a reversible conformational change and reversible aggregation occur. The physical and chemical properties, both in solution and as a biofilm, are affected by polysaccharides that act as hydrophilic stabilizer.

The protein localises to the secreted. It localises to the cell wall. Its function is as follows. Aerial growth, conidiation, and dispersal of filamentous fungi in the environment rely upon a capability of their secreting small amphipathic proteins called hydrophobins (HPBs) with low sequence identity. Class I can self-assemble into an outermost layer of rodlet bundles on aerial cell surfaces, conferring cellular hydrophobicity that supports fungal growth, development and dispersal; whereas Class II form highly ordered films at water-air interfaces through intermolecular interactions but contribute nothing to the rodlet structure. Vmh2 is a class I hydrophobin involved in biofilm formation and is essential for the maintenance of the surface hydrophobicity of the mycelium. Seems not to be involved in hyphal resistance against environmental stress. This chain is Class I hydrophobin 2, found in Pleurotus ostreatus (strain PC15) (Oyster mushroom).